A 240-amino-acid chain; its full sequence is MSIISEHGFRMDGRRPAQIRNINTRLGLNRNAEGSCYLEHGNTKVLCAVYGPYESKASKRLEDRCAIVCQYSTTTFSGLERKNRPRGDRKSTEISRLLEKAFESVILTESFPRSQIDIFCEVIQGDGSNLAACVNATSLALADAGIPMKGIASAATCGIVETKPIVDLTSREETDLLPRVTLATICGRDEVILVELQNRLHIDHLSVVMDAAKATCADVYECLAVVAQQHLKACAPILGN.

The protein belongs to the RNase PH family. Component of the RNA exosome complex.

It localises to the cytoplasm. The protein localises to the nucleus. Its subcellular location is the nucleolus. It is found in the nucleoplasm. Functionally, non-catalytic component of the RNA exosome complex which has 3'-&gt;5' exoribonuclease activity and participates in a multitude of cellular RNA processing and degradation events. The chain is Putative exosome complex component RRP41 (exos-4.1) from Caenorhabditis briggsae.